The sequence spans 396 residues: S-adenosylmethionine synthase (396 aa).

His16 is an ATP binding site. Position 18 (Asp18) interacts with Mg(2+). Position 44 (Glu44) interacts with K(+). The L-methionine site is built by Glu57 and Gln100. The segment at 100–110 (QSPDINQGVDR) is flexible loop. ATP-binding positions include 165 to 167 (DAK), 231 to 232 (KF), Asp240, 246 to 247 (RK), Ala263, and Lys267. Residue Asp240 participates in L-methionine binding. Position 271 (Lys271) interacts with L-methionine.

The protein belongs to the AdoMet synthase family. As to quaternary structure, homotetramer; dimer of dimers. Mg(2+) serves as cofactor. It depends on K(+) as a cofactor.

The protein localises to the cytoplasm. The enzyme catalyses L-methionine + ATP + H2O = S-adenosyl-L-methionine + phosphate + diphosphate. It functions in the pathway amino-acid biosynthesis; S-adenosyl-L-methionine biosynthesis; S-adenosyl-L-methionine from L-methionine: step 1/1. Functionally, catalyzes the formation of S-adenosylmethionine (AdoMet) from methionine and ATP. The overall synthetic reaction is composed of two sequential steps, AdoMet formation and the subsequent tripolyphosphate hydrolysis which occurs prior to release of AdoMet from the enzyme. This chain is S-adenosylmethionine synthase, found in Ectopseudomonas mendocina (strain ymp) (Pseudomonas mendocina).